A 683-amino-acid polypeptide reads, in one-letter code: Patellin-2 (683 aa).

Residues 1-23 (MAQEEIQKPTASVPVVKEETPAP) form a disordered region. N-acetylalanine is present on alanine 2. A Phosphoserine modification is found at serine 79. A coiled-coil region spans residues 86 to 163 (LASELQEAEK…ETKEEEKSAA (78 aa)). Residues 111–279 (KREFTAPPPP…KKEEKATAST (169 aa)) are disordered. A compositionally biased stretch (basic and acidic residues) spans 124–161 (VKEEKVEEKKTEETEEKKEEVKTEEKSLEAETKEEEKS). Over residues 232–243 (PVETTPAAPVTT) the composition is skewed to low complexity. Residues 244–275 (ETKEEEKAAPVTTETKEEEKAAPGETKKEEKA) are compositionally biased toward basic and acidic residues. Residue lysine 394 forms a Glycyl lysine isopeptide (Lys-Gly) (interchain with G-Cter in ubiquitin) linkage. Residues 404–576 (EDLEGSEFEK…KYGGLSKDSP (173 aa)) enclose the CRAL-TRIO domain. Residues 580 to 681 (EDGVTEAVVK…KKKVLYRSKT (102 aa)) form the GOLD domain.

Belongs to the patellin family. Interacts with the deubiquitinating enzyme AMSH3.

It localises to the membrane. The protein localises to the cytoplasm. In terms of biological role, carrier protein that may be involved in membrane-trafficking events associated with cell plate formation during cytokinesis. Binds to some hydrophobic molecules such as phosphoinositides and promotes their transfer between the different cellular sites. This chain is Patellin-2 (PATL2), found in Arabidopsis thaliana (Mouse-ear cress).